Consider the following 310-residue polypeptide: MTEQIQERTKAQQYNFNKLQKRIRRNTGQAIADFNMIEDGDRIMVCLSGGKDSFTMLDILISLQKSAPISFSLVAVNLDQKQPGFPAHVLPEYLESLGVEYKIVEEDTYSIVQDKIPEGKTTCSLCSRLRRGILYRTAKELGATKIALGHHRDDILETLFLNMFYGGKMKGMPPKLVSDNGEHVVIRPLAYCREKDIIKYSDMAGYPIIPCNLCGSQPNLQRQNIKQMLNDWDKRFPGRIETMFRAMQNVVPSHLADFELFDFKSINKDSGVINGGDIGFDKEEMPVATVEDEDMVQEFDPSLKLDVTNI.

A PP-loop motif motif is present at residues 48-53 (SGGKDS). [4Fe-4S] cluster contacts are provided by cysteine 123, cysteine 126, and cysteine 214.

Belongs to the TtcA family. As to quaternary structure, homodimer. The cofactor is Mg(2+). [4Fe-4S] cluster is required as a cofactor.

Its subcellular location is the cytoplasm. The catalysed reaction is cytidine(32) in tRNA + S-sulfanyl-L-cysteinyl-[cysteine desulfurase] + AH2 + ATP = 2-thiocytidine(32) in tRNA + L-cysteinyl-[cysteine desulfurase] + A + AMP + diphosphate + H(+). It functions in the pathway tRNA modification. Its function is as follows. Catalyzes the ATP-dependent 2-thiolation of cytidine in position 32 of tRNA, to form 2-thiocytidine (s(2)C32). The sulfur atoms are provided by the cysteine/cysteine desulfurase (IscS) system. The polypeptide is tRNA-cytidine(32) 2-sulfurtransferase (Vibrio vulnificus (strain CMCP6)).